Here is a 525-residue protein sequence, read N- to C-terminus: GMP synthase [glutamine-hydrolyzing] (525 aa).

In terms of domain architecture, Glutamine amidotransferase type-1 spans 9–207 (RILILDFGSQ…VLQICQCEPL (199 aa)). Catalysis depends on Cys86, which acts as the Nucleophile. Active-site residues include His181 and Glu183. The GMPS ATP-PPase domain maps to 208 to 400 (WTPRNIIDQT…LGLPNAMLHR (193 aa)). 235-241 (SGGVDSA) is a binding site for ATP.

Homodimer.

The enzyme catalyses XMP + L-glutamine + ATP + H2O = GMP + L-glutamate + AMP + diphosphate + 2 H(+). It functions in the pathway purine metabolism; GMP biosynthesis; GMP from XMP (L-Gln route): step 1/1. Catalyzes the synthesis of GMP from XMP. The sequence is that of GMP synthase [glutamine-hydrolyzing] from Hamiltonella defensa subsp. Acyrthosiphon pisum (strain 5AT).